The following is a 285-amino-acid chain: Bifunctional protein FolD (285 aa).

NADP(+) is bound by residues Gly166–Ser168 and Ile232.

Belongs to the tetrahydrofolate dehydrogenase/cyclohydrolase family. As to quaternary structure, homodimer.

It carries out the reaction (6R)-5,10-methylene-5,6,7,8-tetrahydrofolate + NADP(+) = (6R)-5,10-methenyltetrahydrofolate + NADPH. The catalysed reaction is (6R)-5,10-methenyltetrahydrofolate + H2O = (6R)-10-formyltetrahydrofolate + H(+). It participates in one-carbon metabolism; tetrahydrofolate interconversion. Its function is as follows. Catalyzes the oxidation of 5,10-methylenetetrahydrofolate to 5,10-methenyltetrahydrofolate and then the hydrolysis of 5,10-methenyltetrahydrofolate to 10-formyltetrahydrofolate. The sequence is that of Bifunctional protein FolD from Aliivibrio salmonicida (strain LFI1238) (Vibrio salmonicida (strain LFI1238)).